The following is a 203-amino-acid chain: Alpha-amylase/subtilisin inhibitor (203 aa).

Polar residues predominate over residues 1–12 (MGSRRAGSSSSP). Residues 1 to 22 (MGSRRAGSSSSPLFWPAPPSRA) form the signal peptide. Residues 1–34 (MGSRRAGSSSSPLFWPAPPSRAADPPPVHDTDGH) are disordered. Over residues 15–26 (WPAPPSRAADPP) the composition is skewed to pro residues. 2 disulfide bridges follow: cysteine 65–cysteine 112 and cysteine 166–cysteine 170.

This sequence belongs to the protease inhibitor I3 (leguminous Kunitz-type inhibitor) family.

In terms of biological role, this protein inhibits independently subtilisin and alpha-amylase. This chain is Alpha-amylase/subtilisin inhibitor, found in Hordeum vulgare (Barley).